A 258-amino-acid polypeptide reads, in one-letter code: Homeobox-leucine zipper protein ATHB-7 (258 aa).

Positions asparagine 29 to glutamine 88 form a DNA-binding region, homeobox. Residues leucine 89–leucine 124 are leucine-zipper. The tract at residues serine 149–valine 183 is disordered. A compositionally biased stretch (basic and acidic residues) spans threonine 151–valine 183.

Belongs to the HD-ZIP homeobox family. Class I subfamily. In terms of assembly, interacts with TBP2 and TFIIB1. In terms of tissue distribution, widely expressed.

It is found in the nucleus. Functionally, probable transcription activator that may act as growth regulators in response to water deficit. This Arabidopsis thaliana (Mouse-ear cress) protein is Homeobox-leucine zipper protein ATHB-7 (ATHB-7).